Reading from the N-terminus, the 847-residue chain is MSLWGLVSKMPPEKVQRLYVDFPQHLRHLLGDWLESQPWEFLVGSDAFCCNLASALLSDTVQHLQASVGEQGEGSTILQHISTLESIYQRDPLKLVATFRQILQGEKKAVMEQFRHLPMPFHWKQEELKFKTGLRRLQHRVGEIHLLREALQKGAEAGQVSLHSLIETPANGTGPSEALAMLLQETTGELEAAKALVLKRIQIWKRQQQLAGNGAPFEESLAPLQERCESLVDIYSQLQQEVGAAGGELEPKTRASLTGRLDEVLRTLVTSCFLVEKQPPQVLKTQTKFQAGVRFLLGLRFLGAPAKPPLVRADMVTEKQARELSVPQGPGAGAESTGEIINNTVPLENSIPGNCCSALFKNLLLKKIKRCERKGTESVTEEKCAVLFSASFTLGPGKLPIQLQALSLPLVVIVHGNQDNNAKATILWDNAFSEMDRVPFVVAERVPWEKMCETLNLKFMAEVGTNRGLLPEHFLFLAQKIFNDNSLSMEAFQHRSVSWSQFNKEILLGRGFTFWQWFDGVLDLTKRCLRSYWSDRLIIGFISKQYVTSLLLNEPDGTFLLRFSDSEIGGITIAHVIRGQDGSPQIENIQPFSAKDLSIRSLGDRIRDLAQLKNLYPKKPKDEAFRSHYKPEQMGKDGRGYVPATIKMTVERDQPLPTPELQMPTMVPSYDLGMAPDSSMSMQLGPDMVPQVYPPHSHSIPPYQGLSPEESVNVLSAFQEPHLQMPPSLGQMSLPFDQPHPQGLLPCQPQEHAVSSPDPLLCSDVTMVEDSCLSQPVTAFPQGTWIGEDIFPPLLPPTEQDLTKLLLEGQGESGGGSLGAQPLLQPSHYGQSGISMSHMDLRANPSW.

At S2 the chain carries N-acetylserine. Positions 517 to 632 constitute an SH2 domain; it reads WFDGVLDLTK…EAFRSHYKPE (116 aa). Y641 bears the Phosphotyrosine; by JAK mark. The short motif at 802-806 is the LXXLL motif element; sequence LTKLL. The interval 809–847 is disordered; sequence GQGESGGGSLGAQPLLQPSHYGQSGISMSHMDLRANPSW.

Belongs to the transcription factor STAT family. In terms of assembly, forms a homodimer or a heterodimer with a related family member. Interacts with NCOA1 via its C-terminal LXXLL motif. Post-translationally, tyrosine phosphorylated on Tyr-641 following stimulation by IL4/interleukin-4. Tyrosine phosphorylated following stimulation by IL3/interleukin-3. Dephosphorylation on tyrosine residues by PTPN2 negatively regulates the IL4/interleukin-4 mediated signaling. In terms of processing, mono-ADP-ribosylated by PARP14.

The protein resides in the cytoplasm. The protein localises to the nucleus. Its function is as follows. Carries out a dual function: signal transduction and activation of transcription. Involved in IL4/interleukin-4- and IL3/interleukin-3-mediated signaling. The chain is Signal transducer and activator of transcription 6 (STAT6) from Homo sapiens (Human).